An 851-amino-acid polypeptide reads, in one-letter code: Putative serine/threonine-protein kinase 019R (851 aa).

5 disordered regions span residues 1-24 (MATN…RTIK), 61-91 (PRVA…RGGP), 104-160 (GGAS…KRGG), 190-216 (GLSP…ARRS), and 340-400 (SRPS…GEPR). The segment covering 125 to 141 (ARRQSPAEAAEASPCPE) has biased composition (low complexity). Basic residues predominate over residues 196-216 (SHMRKSPARRSPARRSPARRS). Residues 340–366 (SRPSGVSRTSGTSGSSGSSASSRPPNS) are compositionally biased toward low complexity. Residues 456 to 851 (AVSDNVIGQG…GEREIESFTM (396 aa)) form the Protein kinase domain. ATP-binding positions include 462–470 (IGQGSWGSV) and lysine 485. Aspartate 608 functions as the Proton acceptor in the catalytic mechanism.

It belongs to the protein kinase superfamily. Ser/Thr protein kinase family.

The catalysed reaction is L-seryl-[protein] + ATP = O-phospho-L-seryl-[protein] + ADP + H(+). The enzyme catalyses L-threonyl-[protein] + ATP = O-phospho-L-threonyl-[protein] + ADP + H(+). The chain is Putative serine/threonine-protein kinase 019R from Dryophytes versicolor (chameleon treefrog).